The sequence spans 307 residues: Transcription factor bHLH127 (307 aa).

2 disordered regions span residues 41–68 (SDPL…LPHQ) and 101–155 (PHPQ…AEMH). Pro residues predominate over residues 110-119 (APPPPKPPSS). A bHLH domain is found at 150-199 (RAAEMHNLAERRRREKINERMKTLQQLIPRCNKSTKVSMLEDVIEYVKSL).

The protein belongs to the bHLH protein family. In terms of assembly, homodimer.

It localises to the nucleus. This chain is Transcription factor bHLH127 (BHLH127), found in Arabidopsis thaliana (Mouse-ear cress).